Reading from the N-terminus, the 185-residue chain is MIDEALFDAEEKMEKAVSVAREDMATIRTGRANPGMFSRIVIDYYGTHTPITQLASINVPEARMVVIKPYEANQLHAIETAIRNSDLGVNPTNDGTIIRVAVPQLTEERRRDLVKQAKHKGEEARVSVRNIRRKAMEELHRIRKDGEAGEDEVARAEKDLDKSTHQYVAQIDELVKHKEGDLLEV.

The disordered stretch occupies residues 143 to 163 (RKDGEAGEDEVARAEKDLDKS).

The protein belongs to the RRF family.

It localises to the cytoplasm. Responsible for the release of ribosomes from messenger RNA at the termination of protein biosynthesis. May increase the efficiency of translation by recycling ribosomes from one round of translation to another. The chain is Ribosome-recycling factor from Mycobacterium ulcerans (strain Agy99).